The primary structure comprises 1441 residues: Gag-Pol polyprotein (1441 aa).

Residue Gly2 is the site of N-myristoyl glycine; by host attachment. The Nuclear export signal signature appears at 16 to 22; the sequence is FEKIRLK. A Nuclear localization signal motif is present at residues 26 to 32; the sequence is KKCYRLK. The segment at 204 to 226 is disordered; sequence THPQQQPAQPGGGLRTPSGSDIA. 2 consecutive CCHC-type zinc fingers follow at residues 386 to 403 and 407 to 424; these read PICF…FFKA and KGCW…QCPK. Residues 444-466 are compositionally biased toward polar residues; sequence TGELSGTRGDSNSSTIRGETSAE. The segment at 444 to 494 is disordered; sequence TGELSGTRGDSNSSTIRGETSAENSEHLSEIRERAQAEDEGGEERGGFSFP. Residues 467–480 are compositionally biased toward basic and acidic residues; the sequence is NSEHLSEIRERAQA. Positions 513–584 constitute a Peptidase A2 domain; that stretch reads IRALLDTGAD…TPIDIIGRNI (72 aa). Asp518 functions as the For protease activity; shared with dimeric partner in the catalytic mechanism. Residues 640–830 form the Reverse transcriptase domain; that stretch reads EGKISRVDPG…PPFHWMGYEL (191 aa). Asp706, Asp781, and Asp782 together coordinate Mg(2+). The interval 823–831 is RT 'primer grip'; the sequence is FHWMGYELH. A Tryptophan repeat motif motif is present at residues 994-1010; that stretch reads WEDWWHEYWQCTWIPEV. The RNase H type-1 domain maps to 1030 to 1153; it reads LEGVETYYVD…IDKLVSSGIR (124 aa). Mg(2+) is bound by residues Asp1039, Glu1074, Asp1094, and Asp1145. The Integrase-type zinc-finger motif lies at 1159–1200; that stretch reads QNIEPAQEEHEKYHSNEAQLREKFHLPALVAKQIVQSCSKCC. Residues His1168, His1172, Cys1196, and Cys1199 each coordinate Zn(2+). Positions 1210-1360 constitute an Integrase catalytic domain; the sequence is TDASLGVWQI…TAGERIVNMI (151 aa). Mg(2+) is bound by residues Asp1220 and Asp1272. Residues 1379–1426 constitute a DNA-binding region (integrase-type); sequence FKVYFREGRDQLWKGPGILLWKGEGAVVLKYQEEIKIVPRRKCKIIKD.

Homotrimer. Interacts with gp41 (via C-terminus). As to quaternary structure, homodimer. The active site consists of two apposed aspartic acid residues. In terms of assembly, heterodimer of p66 RT and p51 RT (RT p66/p51). Heterodimerization of RT is essential for DNA polymerase activity. Despite the sequence identities, p66 RT and p51 RT have distinct folding. Homotetramer; may further associate as a homohexadecamer. It depends on Mg(2+) as a cofactor. In terms of processing, specific enzymatic cleavages by the viral protease yield mature proteins. The protease is released by autocatalytic cleavage. The polyprotein is cleaved during and after budding, this process is termed maturation. Proteolytic cleavage of p66 RT removes the RNase H domain to yield the p51 RT subunit. Capsid protein p24 is phosphorylated.

It localises to the virion. The protein resides in the host nucleus. Its subcellular location is the host cytoplasm. It is found in the host cell membrane. It catalyses the reaction Specific for a P1 residue that is hydrophobic, and P1' variable, but often Pro.. The enzyme catalyses Endohydrolysis of RNA in RNA/DNA hybrids. Three different cleavage modes: 1. sequence-specific internal cleavage of RNA. Human immunodeficiency virus type 1 and Moloney murine leukemia virus enzymes prefer to cleave the RNA strand one nucleotide away from the RNA-DNA junction. 2. RNA 5'-end directed cleavage 13-19 nucleotides from the RNA end. 3. DNA 3'-end directed cleavage 15-20 nucleotides away from the primer terminus.. The catalysed reaction is 3'-end directed exonucleolytic cleavage of viral RNA-DNA hybrid.. It carries out the reaction DNA(n) + a 2'-deoxyribonucleoside 5'-triphosphate = DNA(n+1) + diphosphate. The viral protease is inhibited by many synthetic protease inhibitors (PIs), such as amprenavir, atazanavir, indinavir, loprinavir, nelfinavir, ritonavir and saquinavir. RT can be inhibited either by nucleoside RT inhibitors (NRTIs) or by non nucleoside RT inhibitors (NNRTIs). NRTIs act as chain terminators, whereas NNRTIs inhibit DNA polymerization by binding a small hydrophobic pocket near the RT active site and inducing an allosteric change in this region. Classical NRTIs are abacavir, adefovir (PMEA), didanosine (ddI), lamivudine (3TC), stavudine (d4T), tenofovir (PMPA), zalcitabine (ddC), and zidovudine (AZT). Classical NNRTIs are atevirdine (BHAP U-87201E), delavirdine, efavirenz (DMP-266), emivirine (I-EBU), and nevirapine (BI-RG-587). The tritherapies used as a basic effective treatment of AIDS associate two NRTIs and one NNRTI. Use of protease inhibitors in tritherapy regimens permit more ambitious therapeutic strategies. In terms of biological role, gag-Pol polyprotein and Gag polyprotein may regulate their own translation, by the binding genomic RNA in the 5'-UTR. At low concentration, Gag-Pol and Gag would promote translation, whereas at high concentration, the polyproteins encapsidate genomic RNA and then shut off translation. Its function is as follows. Matrix protein p17 has two main functions: in infected cell, it targets Gag and Gag-pol polyproteins to the plasma membrane via a multipartite membrane-binding signal, that includes its myristointegration complex. The myristoylation signal and the NLS exert conflicting influences its subcellular localization. The key regulation of these motifs might be phosphorylation of a portion of MA molecules on the C-terminal tyrosine at the time of virus maturation, by virion-associated cellular tyrosine kinase. Implicated in the release from host cell mediated by Vpu. Functionally, capsid protein p24 forms the conical core that encapsulates the genomic RNA-nucleocapsid complex in the virion. The core is constituted by capsid protein hexamer subunits. The core is disassembled soon after virion entry. Interaction with host PPIA/CYPA protects the virus from restriction by host TRIM5-alpha and from an unknown antiviral activity in host cells. This capsid restriction by TRIM5 is one of the factors which restricts SIV to the simian species. Nucleocapsid protein p7 encapsulates and protects viral dimeric unspliced (genomic) RNA. Binds these RNAs through its zinc fingers. Facilitates rearangement of nucleic acid secondary structure during retrotranscription of genomic RNA. This capability is referred to as nucleic acid chaperone activity. In terms of biological role, the aspartyl protease mediates proteolytic cleavages of Gag and Gag-Pol polyproteins during or shortly after the release of the virion from the plasma membrane. Cleavages take place as an ordered, step-wise cascade to yield mature proteins. This process is called maturation. Displays maximal activity during the budding process just prior to particle release from the cell. Also cleaves Nef and Vif, probably concomitantly with viral structural proteins on maturation of virus particles. Hydrolyzes host EIF4GI and PABP1 in order to shut off the capped cellular mRNA translation. The resulting inhibition of cellular protein synthesis serves to ensure maximal viral gene expression and to evade host immune response. Its function is as follows. Reverse transcriptase/ribonuclease H (RT) is a multifunctional enzyme that converts the viral dimeric RNA genome into dsDNA in the cytoplasm, shortly after virus entry into the cell. This enzyme displays a DNA polymerase activity that can copy either DNA or RNA templates, and a ribonuclease H (RNase H) activity that cleaves the RNA strand of RNA-DNA heteroduplexes in a partially processive 3' to 5' endonucleasic mode. Conversion of viral genomic RNA into dsDNA requires many steps. A tRNA binds to the primer-binding site (PBS) situated at the 5'-end of the viral RNA. RT uses the 3' end of the tRNA primer to perform a short round of RNA-dependent minus-strand DNA synthesis. The reading proceeds through the U5 region and ends after the repeated (R) region which is present at both ends of viral RNA. The portion of the RNA-DNA heteroduplex is digested by the RNase H, resulting in a ssDNA product attached to the tRNA primer. This ssDNA/tRNA hybridizes with the identical R region situated at the 3' end of viral RNA. This template exchange, known as minus-strand DNA strong stop transfer, can be either intra- or intermolecular. RT uses the 3' end of this newly synthesized short ssDNA to perform the RNA-dependent minus-strand DNA synthesis of the whole template. RNase H digests the RNA template except for two polypurine tracts (PPTs) situated at the 5'-end and near the center of the genome. It is not clear if both polymerase and RNase H activities are simultaneous. RNase H can probably proceed both in a polymerase-dependent (RNA cut into small fragments by the same RT performing DNA synthesis) and a polymerase-independent mode (cleavage of remaining RNA fragments by free RTs). Secondly, RT performs DNA-directed plus-strand DNA synthesis using the PPTs that have not been removed by RNase H as primers. PPTs and tRNA primers are then removed by RNase H. The 3' and 5' ssDNA PBS regions hybridize to form a circular dsDNA intermediate. Strand displacement synthesis by RT to the PBS and PPT ends produces a blunt ended, linear dsDNA copy of the viral genome that includes long terminal repeats (LTRs) at both ends. Functionally, integrase catalyzes viral DNA integration into the host chromosome, by performing a series of DNA cutting and joining reactions. This enzyme activity takes place after virion entry into a cell and reverse transcription of the RNA genome in dsDNA. The first step in the integration process is 3' processing. This step requires a complex comprising the viral genome, matrix protein, Vpr and integrase. This complex is called the pre-integration complex (PIC). The integrase protein removes 2 nucleotides from each 3' end of the viral DNA, leaving recessed CA OH's at the 3' ends. In the second step, the PIC enters cell nucleus. This process is mediated through integrase and Vpr proteins, and allows the virus to infect a non dividing cell. This ability to enter the nucleus is specific of lentiviruses, other retroviruses cannot and rely on cell division to access cell chromosomes. In the third step, termed strand transfer, the integrase protein joins the previously processed 3' ends to the 5' ends of strands of target cellular DNA at the site of integration. The 5'-ends are produced by integrase-catalyzed staggered cuts, 5 bp apart. A Y-shaped, gapped, recombination intermediate results, with the 5'-ends of the viral DNA strands and the 3' ends of target DNA strands remaining unjoined, flanking a gap of 5 bp. The last step is viral DNA integration into host chromosome. This involves host DNA repair synthesis in which the 5 bp gaps between the unjoined strands are filled in and then ligated. Since this process occurs at both cuts flanking the SIV genome, a 5 bp duplication of host DNA is produced at the ends of SIV integration. Alternatively, Integrase may catalyze the excision of viral DNA just after strand transfer, this is termed disintegration. This chain is Gag-Pol polyprotein (gag-pol), found in Cercopithecidae (Old World monkeys).